Here is a 407-residue protein sequence, read N- to C-terminus: Aminomethyltransferase, mitochondrial (407 aa).

The N-terminal 29 residues, 1-29, are a transit peptide targeting the mitochondrion; it reads MRGGLWQVGQSITRRLGQSDKKTIVRRWY. 3 residues coordinate substrate: Glu-234, Arg-265, and Tyr-403.

Belongs to the GcvT family. In terms of assembly, the glycine cleavage system is composed of four proteins: P, T, L and H.

The protein localises to the mitochondrion. The catalysed reaction is N(6)-[(R)-S(8)-aminomethyldihydrolipoyl]-L-lysyl-[protein] + (6S)-5,6,7,8-tetrahydrofolate = N(6)-[(R)-dihydrolipoyl]-L-lysyl-[protein] + (6R)-5,10-methylene-5,6,7,8-tetrahydrofolate + NH4(+). The glycine cleavage system catalyzes the degradation of glycine. The protein is Aminomethyltransferase, mitochondrial (GDCST) of Flaveria trinervia (Clustered yellowtops).